The following is a 422-amino-acid chain: Protein krasavietz (422 aa).

Residues Met1 to Tyr26 are disordered. The W2 domain maps to Lys244–Glu415. A phosphoserine mark is found at Ser407, Ser412, and Ser414.

This sequence belongs to the BZW family. In terms of tissue distribution, expressed in mushroom bodies.

Functionally, may be involved in memory formation. The protein is Protein krasavietz (kra) of Drosophila melanogaster (Fruit fly).